We begin with the raw amino-acid sequence, 328 residues long: Lipoyl synthase (328 aa).

The [4Fe-4S] cluster site is built by Cys-56, Cys-61, Cys-67, Cys-82, Cys-86, Cys-89, and Ser-293. The 215-residue stretch at 68-282 (WEDREATFLI…ERVGAELGFS (215 aa)) folds into the Radical SAM core domain.

Belongs to the radical SAM superfamily. Lipoyl synthase family. [4Fe-4S] cluster is required as a cofactor.

The protein localises to the cytoplasm. The enzyme catalyses [[Fe-S] cluster scaffold protein carrying a second [4Fe-4S](2+) cluster] + N(6)-octanoyl-L-lysyl-[protein] + 2 oxidized [2Fe-2S]-[ferredoxin] + 2 S-adenosyl-L-methionine + 4 H(+) = [[Fe-S] cluster scaffold protein] + N(6)-[(R)-dihydrolipoyl]-L-lysyl-[protein] + 4 Fe(3+) + 2 hydrogen sulfide + 2 5'-deoxyadenosine + 2 L-methionine + 2 reduced [2Fe-2S]-[ferredoxin]. The protein operates within protein modification; protein lipoylation via endogenous pathway; protein N(6)-(lipoyl)lysine from octanoyl-[acyl-carrier-protein]: step 2/2. Functionally, catalyzes the radical-mediated insertion of two sulfur atoms into the C-6 and C-8 positions of the octanoyl moiety bound to the lipoyl domains of lipoate-dependent enzymes, thereby converting the octanoylated domains into lipoylated derivatives. The polypeptide is Lipoyl synthase (Frankia alni (strain DSM 45986 / CECT 9034 / ACN14a)).